The chain runs to 338 residues: 1-aminocyclopropane-1-carboxylate deaminase (338 aa).

The residue at position 51 (Lys-51) is an N6-(pyridoxal phosphate)lysine. The Nucleophile role is filled by Ser-78.

It belongs to the ACC deaminase/D-cysteine desulfhydrase family. As to quaternary structure, homotrimer. It depends on pyridoxal 5'-phosphate as a cofactor.

The enzyme catalyses 1-aminocyclopropane-1-carboxylate + H2O = 2-oxobutanoate + NH4(+). Its function is as follows. Catalyzes a cyclopropane ring-opening reaction, the irreversible conversion of 1-aminocyclopropane-1-carboxylate (ACC) to ammonia and alpha-ketobutyrate. Allows growth on ACC as a nitrogen source. The protein is 1-aminocyclopropane-1-carboxylate deaminase of Paracidovorax citrulli (strain AAC00-1) (Acidovorax citrulli).